Reading from the N-terminus, the 292-residue chain is Transmembrane and ubiquitin-like domain-containing protein 1 (292 aa).

A helical membrane pass occupies residues 11–31 (VTLLFGVVFLVLVLVLAWAST). The interval 34–143 (VEPPEHLLSP…TQPSAEDAAS (110 aa)) is disordered. Over residues 71–80 (VRDEDDKSEP) the composition is skewed to basic and acidic residues. Over residues 84-94 (AGAAGQSADGS) the composition is skewed to low complexity. Residues 149 to 222 (MVLRLKFLND…LHCHISQHAT (74 aa)) enclose the Ubiquitin-like domain. Transmembrane regions (helical) follow at residues 237–257 (VALN…SVLW) and 269–289 (APAT…AFGV).

Its subcellular location is the membrane. The protein resides in the cytoplasm. It is found in the nucleus. Its function is as follows. May contribute to the regulation of translation during cell-cycle progression. May contribute to the regulation of cell proliferation. The membrane form is involved in sterol-regulated ubiquitination and degradation of HMG-CoA reductase HMGCR. May be involved in centrosome assembly. This Danio rerio (Zebrafish) protein is Transmembrane and ubiquitin-like domain-containing protein 1 (tmub1).